We begin with the raw amino-acid sequence, 310 residues long: HPr kinase/phosphorylase (310 aa).

Active-site residues include H138 and K159. Residue G153–S160 coordinates ATP. S160 provides a ligand contact to Mg(2+). D177 functions as the Proton acceptor; for phosphorylation activity. Proton donor; for dephosphorylation activity in the catalytic mechanism. The interval L201 to N210 is important for the catalytic mechanism of both phosphorylation and dephosphorylation. E202 contacts Mg(2+). R243 is a catalytic residue. Residues P264–R269 are important for the catalytic mechanism of dephosphorylation.

This sequence belongs to the HPrK/P family. Homohexamer. It depends on Mg(2+) as a cofactor.

The enzyme catalyses [HPr protein]-L-serine + ATP = [HPr protein]-O-phospho-L-serine + ADP + H(+). It catalyses the reaction [HPr protein]-O-phospho-L-serine + phosphate + H(+) = [HPr protein]-L-serine + diphosphate. Functionally, catalyzes the ATP- as well as the pyrophosphate-dependent phosphorylation of a specific serine residue in HPr, a phosphocarrier protein of the phosphoenolpyruvate-dependent sugar phosphotransferase system (PTS). HprK/P also catalyzes the pyrophosphate-producing, inorganic phosphate-dependent dephosphorylation (phosphorolysis) of seryl-phosphorylated HPr (P-Ser-HPr). The two antagonistic activities of HprK/P are regulated by several intracellular metabolites, which change their concentration in response to the absence or presence of rapidly metabolisable carbon sources (glucose, fructose, etc.) in the growth medium. Also phosphorylates/dephosphorylates the HPr-like catabolite repression protein crh on a specific serine residue. Therefore, by controlling the phosphorylation state of HPr and crh, HPrK/P is a sensor enzyme that plays a major role in the regulation of carbon metabolism and sugar transport: it mediates carbon catabolite repression (CCR), and regulates PTS-catalyzed carbohydrate uptake and inducer exclusion. The chain is HPr kinase/phosphorylase (hprK) from Halalkalibacterium halodurans (strain ATCC BAA-125 / DSM 18197 / FERM 7344 / JCM 9153 / C-125) (Bacillus halodurans).